The primary structure comprises 23 residues: U22-ctenitoxin-Co1a (23 aa).

In terms of tissue distribution, expressed by the venom gland.

Its subcellular location is the secreted. The protein is U22-ctenitoxin-Co1a of Ctenus ornatus (Brazilian spider).